The sequence spans 409 residues: Elongation factor Tu (409 aa).

Residues 10–214 (KPHVNIGTIG…AVDAYIPTPE (205 aa)) form the tr-type G domain. The G1 stretch occupies residues 19 to 26 (GHVDHGKT). A GTP-binding site is contributed by 19-26 (GHVDHGKT). Thr26 is a binding site for Mg(2+). The segment at 60–64 (GITIN) is G2. A G3 region spans residues 81–84 (DCPG). Residues 81–85 (DCPGH) and 136–139 (NKKD) each bind GTP. Residues 136–139 (NKKD) are G4. The interval 174 to 176 (SAL) is G5.

Belongs to the TRAFAC class translation factor GTPase superfamily. Classic translation factor GTPase family. EF-Tu/EF-1A subfamily. As to quaternary structure, monomer.

Its subcellular location is the cytoplasm. It catalyses the reaction GTP + H2O = GDP + phosphate + H(+). Functionally, GTP hydrolase that promotes the GTP-dependent binding of aminoacyl-tRNA to the A-site of ribosomes during protein biosynthesis. The protein is Elongation factor Tu of Gloeobacter violaceus (strain ATCC 29082 / PCC 7421).